The primary structure comprises 128 residues: Mediator of RNA polymerase II transcription subunit 31-A (128 aa).

The protein belongs to the Mediator complex subunit 31 family. As to quaternary structure, component of the Mediator complex.

Its subcellular location is the nucleus. Component of the Mediator complex, a coactivator involved in the regulated transcription of nearly all RNA polymerase II-dependent genes. Mediator functions as a bridge to convey information from gene-specific regulatory proteins to the basal RNA polymerase II transcription machinery. Mediator is recruited to promoters by direct interactions with regulatory proteins and serves as a scaffold for the assembly of a functional preinitiation complex with RNA polymerase II and the general transcription factors. This chain is Mediator of RNA polymerase II transcription subunit 31-A (med31-a), found in Xenopus laevis (African clawed frog).